The primary structure comprises 667 residues: uncharacterized protein (667 aa).

This is an uncharacterized protein from Mycoplasma genitalium (strain ATCC 33530 / DSM 19775 / NCTC 10195 / G37) (Mycoplasmoides genitalium).